The following is a 157-amino-acid chain: 2-C-methyl-D-erythritol 2,4-cyclodiphosphate synthase (157 aa).

Residues aspartate 9 and histidine 11 each contribute to the a divalent metal cation site. Residues 9 to 11 (DVH) and 35 to 36 (HS) contribute to the 4-CDP-2-C-methyl-D-erythritol 2-phosphate site. An a divalent metal cation-binding site is contributed by histidine 43. Residues 57–59 (DIG), 62–66 (FPETD), 133–136 (TTME), phenylalanine 140, and lysine 143 contribute to the 4-CDP-2-C-methyl-D-erythritol 2-phosphate site.

The protein belongs to the IspF family. In terms of assembly, homotrimer. Requires a divalent metal cation as cofactor.

It catalyses the reaction 4-CDP-2-C-methyl-D-erythritol 2-phosphate = 2-C-methyl-D-erythritol 2,4-cyclic diphosphate + CMP. The protein operates within isoprenoid biosynthesis; isopentenyl diphosphate biosynthesis via DXP pathway; isopentenyl diphosphate from 1-deoxy-D-xylulose 5-phosphate: step 4/6. In terms of biological role, involved in the biosynthesis of isopentenyl diphosphate (IPP) and dimethylallyl diphosphate (DMAPP), two major building blocks of isoprenoid compounds. Catalyzes the conversion of 4-diphosphocytidyl-2-C-methyl-D-erythritol 2-phosphate (CDP-ME2P) to 2-C-methyl-D-erythritol 2,4-cyclodiphosphate (ME-CPP) with a corresponding release of cytidine 5-monophosphate (CMP). The polypeptide is 2-C-methyl-D-erythritol 2,4-cyclodiphosphate synthase (Enterococcus faecalis (strain ATCC 700802 / V583)).